The primary structure comprises 156 residues: uncharacterized protein (156 aa).

His-55 is an active-site residue.

It belongs to the thioester dehydratase family. FabZ subfamily.

This is an uncharacterized protein from Halalkalibacterium halodurans (strain ATCC BAA-125 / DSM 18197 / FERM 7344 / JCM 9153 / C-125) (Bacillus halodurans).